A 270-amino-acid polypeptide reads, in one-letter code: MTVLKEQPPRLLRGIPLASSGLRKTFGQREVLKGIELHIPAGQFVAIVGRSGCGKSTLLRLLAGLDQPTAGQLLAGAAPLEQAREETRLMFQDARLLPWKKVIDNVGLGLSGDWRPRALEALESVGLADRANEWPAALSGGQKQRVALARALIHQPRLLLLDEPLGALDALTRIEMQQLIERLWRQHGFTVLLVTHDVSEAVAVADRVILIEDGEVGLDLTVDLARPRARGSHRLAALESEVLNRVLSAPGAAPEPDPVAPLPTQLRWAH.

Residues 17-238 (LASSGLRKTF…ARGSHRLAAL (222 aa)) enclose the ABC transporter domain. Residue 49–56 (GRSGCGKS) participates in ATP binding. The disordered stretch occupies residues 249 to 270 (APGAAPEPDPVAPLPTQLRWAH).

The protein belongs to the ABC transporter superfamily. Aliphatic sulfonates importer (TC 3.A.1.17.2) family. In terms of assembly, the complex is composed of two ATP-binding proteins (SsuB), two transmembrane proteins (SsuC) and a solute-binding protein (SsuA).

Its subcellular location is the cell inner membrane. The enzyme catalyses ATP + H2O + aliphatic sulfonate-[sulfonate-binding protein]Side 1 = ADP + phosphate + aliphatic sulfonateSide 2 + [sulfonate-binding protein]Side 1.. Its function is as follows. Part of the ABC transporter complex SsuABC involved in aliphatic sulfonates import. Responsible for energy coupling to the transport system. The sequence is that of Aliphatic sulfonates import ATP-binding protein SsuB from Pseudomonas putida (Arthrobacter siderocapsulatus).